Reading from the N-terminus, the 455-residue chain is Protein king tubby (455 aa).

The disordered stretch occupies residues 35 to 92 (RPMSGMRGNSRELHAYDGPMQFIGSPHNPDQILSNNSSSVHLSSSMNSSRNNSNNLRS). Residues 67–92 (LSNNSSSVHLSSSMNSSRNNSNNLRS) are compositionally biased toward low complexity. Serine 144 carries the phosphoserine modification.

The protein belongs to the TUB family.

The protein localises to the cytoplasm. Its subcellular location is the nucleus. It is found in the cell projection. The protein resides in the cilium membrane. It localises to the rhabdomere. The polypeptide is Protein king tubby (Drosophila virilis (Fruit fly)).